The sequence spans 338 residues: GTPase Obg (338 aa).

In terms of domain architecture, Obg spans 1-159 (MKFLDKAIIH…RILRLELILI (159 aa)). Residues 160–333 (AHVGTLGLPN…IVKKIYDFLK (174 aa)) enclose the OBG-type G domain. GTP contacts are provided by residues 166–173 (GLPNSGKS), 191–195 (FTTLK), 213–216 (DIPG), 283–286 (NKID), and 314–316 (SAI). Mg(2+) contacts are provided by S173 and T193.

The protein belongs to the TRAFAC class OBG-HflX-like GTPase superfamily. OBG GTPase family. Monomer. It depends on Mg(2+) as a cofactor.

Its subcellular location is the cytoplasm. In terms of biological role, an essential GTPase which binds GTP, GDP and possibly (p)ppGpp with moderate affinity, with high nucleotide exchange rates and a fairly low GTP hydrolysis rate. Plays a role in control of the cell cycle, stress response, ribosome biogenesis and in those bacteria that undergo differentiation, in morphogenesis control. The chain is GTPase Obg from Buchnera aphidicola subsp. Baizongia pistaciae (strain Bp).